We begin with the raw amino-acid sequence, 1067 residues long: MAAEGGRCQKSYFDVLGICCPSEVPLVEKLLQPLEGVQKVTVIVPSRTVIVVHDVDAISQSQIVKALNQARLEASVRAYGNGSEKITNKWPSPYVLLCGLLLVVSLFEHFWHPLKWFALVAAAAGLPPIVLRSIAAIRRLTLDVNILMLIAVAGAIALKDYSEAGFIVFLFTTAEWLETRASHKATAGMSALMSMAPQKAILAETGEVVAARDVKVNTVIAVKAGEVIPIDGVVVDGRSEVDESTLTGESFPVSKQPDSQVWAGTLNIDGYIAVRTTAMADNSAVAKMARLVEEAQNSRSSTQRLIDTCAKYYTPAVVVMAGSVAAIPAIAKAHNLKHWFQLALVLLVSACPCALVLSTPIATFCALLRAARTGLLIKGGDVLESLASIKVAAFDKTGTITRGEFSVEEFQPVGERVSLQQLLYWVSSVESRSSHPMASVLVDYAQSKSVEPKSENVSEFQIYPGEGIYGEIDGAGIYIGNKRILSRASCETVPDMKDMKGVTIGYVACNNELIGVFTLSDACRTGSAEAIKELRSLGIKSVMLTGDSSAAATYAQNQLGNILAEVHAELLPEDKVRIVGELKEKDGPTLMVGDGMNDAPALAKADVGVSMGVSGSAVAMETSHVALMSNDIRRIPKAVRLARRTHRTIIVNIIFSVITKLAIVGLAFAGHPLIWAAVLADVGTCLLVIMYSMLLLREKDSRKAKKCAASHHGSPKKCCSSSHHGSHAKKNHGVSHHCSDGPCKSMVSCKESSVAKNACHDHHHEHNHHEEPAHKHSSNQHGCHDHSHGHSNCKEPSNQLITNKHACHDGHNHCADTSNLHDTKKHDCHGHEHSTCKEELNALPPTNDHACHGHEHSHCEEPVALHSTGEHACHEHEHEHIHCDEPIGSHCADKHACHDHEQVHEHHCCDEQQTPHTADLHPCHDHDHDNLEVEEVKDCHAEPPHHHNHCCHEPHDQVKNDTHPVQEHSISIEESSDHHEHHHNEEHKAEDCGHHPKPKDCAPPPTDCISRNCCSNTSKGKDICSSLHRDHHTSQASRCCRSYVKCSRPSRSCCSHSIVKLPEIVVE.

Residues 9-75 (QKSYFDVLGI…ALNQARLEAS (67 aa)) enclose the HMA domain. 8 consecutive transmembrane segments (helical) span residues 94–114 (YVLLCGLLLVVSLFEHFWHPL), 117–137 (FALVAAAAGLPPIVLRSIAAI), 140–160 (LTLDVNILMLIAVAGAIALKD), 162–182 (SEAGFIVFLFTTAEWLETRAS), 313–333 (YTPAVVVMAGSVAAIPAIAKA), 342–362 (LALVLLVSACPCALVLSTPIA), 649–669 (IIVNIIFSVITKLAIVGLAFA), and 673–693 (LIWAAVLADVGTCLLVIMYSM). 3 disordered regions span residues 711–739 (HHGSPKKCCSSSHHGSHAKKNHGVSHHCS), 760–790 (HDHHHEHNHHEEPAHKHSSNQHGCHDHSHGH), and 960–996 (NDTHPVQEHSISIEESSDHHEHHHNEEHKAEDCGHHP). The span at 724–735 (HGSHAKKNHGVS) shows a compositional bias: basic residues. Composition is skewed to basic and acidic residues over residues 760 to 774 (HDHHHEHNHHEEPAH) and 975 to 996 (SSDHHEHHHNEEHKAEDCGHHP).

Belongs to the cation transport ATPase (P-type) (TC 3.A.3) family. Type IB subfamily. In terms of tissue distribution, in roots, localizes at the pericycle cells. In nodes, localizes in the phloem parenchyma and companion cells of both enlarged and diffuse vascular bundles.

The protein resides in the cell membrane. It catalyses the reaction Zn(2+)(in) + ATP + H2O = Zn(2+)(out) + ADP + phosphate + H(+). The enzyme catalyses Cd(2+)(in) + ATP + H2O = Cd(2+)(out) + ADP + phosphate + H(+). Its function is as follows. Zinc/cadmium transporter that plays an essential role in promoting translocation of zinc and cadmium from roots to shoots. May control cadmium loading into xylem. In roots, transports zinc and cadmium from the apoplast to the symplast to facilitate translocation via the phloem. In nodes, functions to load zinc and cadmium to the phloem for the preferential distribution to the upper nodes and panicles. This is Cadmium/zinc-transporting ATPase HMA2 from Oryza sativa subsp. japonica (Rice).